A 360-amino-acid polypeptide reads, in one-letter code: NADH-quinone oxidoreductase subunit H (360 aa).

The next 8 helical transmembrane spans lie at 20 to 40 (GMVWPVLWILLKIVALLIPLM), 95 to 115 (GLFVLGPVMAIMPALAAWVVI), 130 to 150 (LLLVMAITSIEVYGVIIAGWA), 176 to 196 (FCLLIVIMVSGSMNLTEIVLA), 206 to 226 (GIGFLSWNWLPLLPVFLVYLI), 261 to 281 (IFFLAEYASMWLVSILAALMF), 297 to 317 (IPGWIWLGIKTCLVVSMFIWI), and 336 to 356 (IFIPVTLACLLIAGGWLLSPW).

This sequence belongs to the complex I subunit 1 family. NDH-1 is composed of 14 different subunits. Subunits NuoA, H, J, K, L, M, N constitute the membrane sector of the complex.

The protein resides in the cell inner membrane. It catalyses the reaction a quinone + NADH + 5 H(+)(in) = a quinol + NAD(+) + 4 H(+)(out). In terms of biological role, NDH-1 shuttles electrons from NADH, via FMN and iron-sulfur (Fe-S) centers, to quinones in the respiratory chain. The immediate electron acceptor for the enzyme in this species is believed to be ubiquinone. Couples the redox reaction to proton translocation (for every two electrons transferred, four hydrogen ions are translocated across the cytoplasmic membrane), and thus conserves the redox energy in a proton gradient. This subunit may bind ubiquinone. The protein is NADH-quinone oxidoreductase subunit H of Verminephrobacter eiseniae (strain EF01-2).